The following is a 205-amino-acid chain: RNA pyrophosphohydrolase (205 aa).

The Nudix hydrolase domain occupies 6–149; that stretch reads GFRPNVGIVL…KRGVYARALR (144 aa). The Nudix box signature appears at 38 to 59; that stretch reads GGMNTDETPVEAMYRELREETG. The disordered stretch occupies residues 177–205; it reads PGSSAAGHDSPRKRPRKRSGARPMRINND. Positions 187-196 are enriched in basic residues; the sequence is PRKRPRKRSG.

Belongs to the Nudix hydrolase family. RppH subfamily. A divalent metal cation is required as a cofactor.

Functionally, accelerates the degradation of transcripts by removing pyrophosphate from the 5'-end of triphosphorylated RNA, leading to a more labile monophosphorylated state that can stimulate subsequent ribonuclease cleavage. The sequence is that of RNA pyrophosphohydrolase from Xanthomonas oryzae pv. oryzae (strain MAFF 311018).